The sequence spans 257 residues: uncharacterized protein (257 aa).

An N-terminal signal peptide occupies residues 1 to 22; the sequence is MIHSKRLKMCLCLIILSVFIGA. Residue Cys-23 is the site of N-palmitoyl cysteine attachment. A lipid anchor (S-diacylglycerol cysteine) is attached at Cys-23.

The protein belongs to the staphylococcal tandem lipoprotein family.

It localises to the cell membrane. This is an uncharacterized protein from Staphylococcus aureus (strain MRSA252).